We begin with the raw amino-acid sequence, 276 residues long: Syntaxin-12 (276 aa).

Residue S2 is modified to N-acetylserine. Residues 2-248 (SYGPLDMYRN…RAAYYQKKSR (247 aa)) are Cytoplasmic-facing. Residues 33–131 (IQRISQATAQ…RRVSEKEKES (99 aa)) are a coiled coil. Residues S139, S142, S218, and S225 each carry the phosphoserine modification. The t-SNARE coiled-coil homology domain occupies 178 to 240 (LELIKERETA…ERATEQLQRA (63 aa)). Residues 249 to 269 (KKMCILVLVLSVIIVILGLII) form a helical; Anchor for type IV membrane protein membrane-spanning segment. Over 270–276 (WLVYKTK) the chain is Vesicular.

This sequence belongs to the syntaxin family. In terms of assembly, associates with the BLOC-1 complex. Interacts with BLOC1S6. Interacts with NAPA and SNAP23. Identified in a complex containing STX6, STX12, VAMP4 and VTI1A. Interacts with GRIPAP1. Forms a complex with GRIP1, GRIA2 and NSG1; controls the intracellular fate of AMPAR and the endosomal sorting of the GRIA2 subunit toward recycling and membrane targeting. Interacts with NSG1. Interacts with TPC1. Interacts (via N-terminus) with VPS13B.

It is found in the endosome membrane. Its subcellular location is the golgi apparatus membrane. The protein localises to the endomembrane system. The protein resides in the early endosome membrane. It localises to the recycling endosome membrane. In terms of biological role, SNARE promoting fusion of transport vesicles with target membranes. Together with SNARE STX6, promotes movement of vesicles from endosomes to the cell membrane, and may therefore function in the endocytic recycling pathway. Through complex formation with GRIP1, GRIA2 and NSG1 controls the intracellular fate of AMPAR and the endosomal sorting of the GRIA2 subunit toward recycling and membrane targeting. The sequence is that of Syntaxin-12 (STX12) from Pongo abelii (Sumatran orangutan).